The chain runs to 325 residues: 5-dehydro-2-deoxygluconokinase (325 aa).

The protein belongs to the carbohydrate kinase PfkB family.

It catalyses the reaction 5-dehydro-2-deoxy-D-gluconate + ATP = 6-phospho-5-dehydro-2-deoxy-D-gluconate + ADP + H(+). It functions in the pathway polyol metabolism; myo-inositol degradation into acetyl-CoA; acetyl-CoA from myo-inositol: step 5/7. Catalyzes the phosphorylation of 5-dehydro-2-deoxy-D-gluconate (2-deoxy-5-keto-D-gluconate or DKG) to 6-phospho-5-dehydro-2-deoxy-D-gluconate (DKGP). This is 5-dehydro-2-deoxygluconokinase from Listeria monocytogenes serotype 4a (strain HCC23).